Here is a 104-residue protein sequence, read N- to C-terminus: Inner membrane protein YjeO (104 aa).

The Cytoplasmic segment spans residues 1–5 (MSARM). Residues 6 to 26 (FVLCCIWFIVAFLWITITSAL) traverse the membrane as a helical segment. Topologically, residues 27 to 52 (DKEWMIDGRGINNVCDVLMYLEEDDT) are periplasmic. A helical transmembrane segment spans residues 53–73 (RDVGVIMTLPLFFPFLWFALW). Residues 74–77 (RKKR) lie on the Cytoplasmic side of the membrane. A helical transmembrane segment spans residues 78-98 (GWFMYATALAIFGYWLWQFFL). Over 99–104 (RYQFCL) the chain is Periplasmic.

The protein resides in the cell inner membrane. This chain is Inner membrane protein YjeO (yjeO), found in Escherichia coli (strain K12).